We begin with the raw amino-acid sequence, 182 residues long: Peptide methionine sulfoxide reductase MsrA (182 aa).

C13 is a catalytic residue.

It belongs to the MsrA Met sulfoxide reductase family.

It carries out the reaction L-methionyl-[protein] + [thioredoxin]-disulfide + H2O = L-methionyl-(S)-S-oxide-[protein] + [thioredoxin]-dithiol. The catalysed reaction is [thioredoxin]-disulfide + L-methionine + H2O = L-methionine (S)-S-oxide + [thioredoxin]-dithiol. Has an important function as a repair enzyme for proteins that have been inactivated by oxidation. Catalyzes the reversible oxidation-reduction of methionine sulfoxide in proteins to methionine. The sequence is that of Peptide methionine sulfoxide reductase MsrA from Mycobacterium bovis (strain ATCC BAA-935 / AF2122/97).